A 306-amino-acid chain; its full sequence is D-alanine--D-alanine ligase (306 aa).

In terms of domain architecture, ATP-grasp spans 101–301 (KKILAHAGLP…FPDLVEHLVR (201 aa)). 129–185 (VAELGLPVVVKAPTQGSSIGVYIVEREEDLEARITDAVAYGGTRVLVEKFIAGPELT) contacts ATP. Mg(2+) contacts are provided by Asp-256, Glu-268, and Asn-270.

The protein belongs to the D-alanine--D-alanine ligase family. The cofactor is Mg(2+). Mn(2+) is required as a cofactor.

Its subcellular location is the cytoplasm. The enzyme catalyses 2 D-alanine + ATP = D-alanyl-D-alanine + ADP + phosphate + H(+). The protein operates within cell wall biogenesis; peptidoglycan biosynthesis. Functionally, cell wall formation. The protein is D-alanine--D-alanine ligase of Desulforudis audaxviator (strain MP104C).